A 677-amino-acid polypeptide reads, in one-letter code: Heat shock transcription factor (677 aa).

2 disordered regions span residues 1–56 (MGHN…DDSN) and 115–164 (STSS…SQQP). Composition is skewed to polar residues over residues 115–131 (STSS…TNAT) and 143–164 (QPSS…SQQP). Residues 193–297 (ARPAFVNKLW…EYLLENIVRQ (105 aa)) mediate DNA binding. Residues 320-373 (ELETVKYNQLAIAEDLKRITKDNEMLWKENMMARERHQSQQQVLEKLLRFLSSV) are involved in trimerization. Low complexity-rich tracts occupy residues 400 to 416 (NHMS…INPN) and 457 to 501 (RSMS…QGQQ). Disordered regions lie at residues 400–444 (NHMS…VPLQ), 457–541 (RSMS…NQYS), and 606–677 (KLNP…RRAA). Positions 466–677 (NLNQRQSPQN…NNGQKRRRAA (212 aa)) are activatory. 2 stretches are compositionally biased toward polar residues: residues 502–541 (FSYP…NQYS) and 629–641 (FANT…SEQP). Basic and acidic residues predominate over residues 650 to 669 (EELRNSRLHEPDRSFEEKNN).

The protein belongs to the HSF family. Homotrimer. Homotrimerization increases the affinity of HSF1 to DNA. Post-translationally, exhibits temperature-dependent phosphorylation.

It localises to the nucleus. In terms of biological role, DNA-binding transcription factor that specifically binds heat shock promoter elements (HSE) and activates transcription. The polypeptide is Heat shock transcription factor (Kluyveromyces lactis (strain ATCC 8585 / CBS 2359 / DSM 70799 / NBRC 1267 / NRRL Y-1140 / WM37) (Yeast)).